The following is a 389-amino-acid chain: Endo-chitosanase C (389 aa).

An N-terminal signal peptide occupies residues 1–22; that stretch reads MPIKSFASRLALSLAICGTAMG. The stretch at 280–313 is one R3-1 repeat; it reads CSWPGHCAGFKNKGATCSSNDDCSDDLACQNGKC. The R3-2 repeat unit spans residues 320–350; the sequence is ETCSWEGHCKGATCSSNDDCSDELACISGIC. The R3-3 repeat unit spans residues 357–387; the sequence is ETCEWEGHCEGASCSSHDDCDGNLACKNGKC.

Belongs to the glycosyl hydrolase 75 family.

The protein resides in the secreted. It carries out the reaction Endohydrolysis of beta-(1-&gt;4)-linkages between D-glucosamine residues in a partly acetylated chitosan.. Its function is as follows. Chitosanase catalyzing the endo-type cleavage of chitosan, the deacylated form of chitin. Chitosanase may be crucial in the degradation of the deacetylated portion of chitin in the fungal cell wall. Chitoolisaccharides produced by the hydrolysis of partially N-acetylated chitosan are known to have many biological activities, including antibacterial activity, immune-enhancing effects, and elicitor activity. The chain is Endo-chitosanase C (csnC) from Aspergillus oryzae (strain ATCC 42149 / RIB 40) (Yellow koji mold).